The sequence spans 191 residues: Molybdenum cofactor guanylyltransferase (191 aa).

Residues 13 to 15, Lys26, Asp72, and Asp102 each bind GTP; that span reads LAG. Asp102 lines the Mg(2+) pocket.

Belongs to the MobA family. As to quaternary structure, monomer. Mg(2+) is required as a cofactor.

The protein localises to the cytoplasm. It carries out the reaction Mo-molybdopterin + GTP + H(+) = Mo-molybdopterin guanine dinucleotide + diphosphate. In terms of biological role, transfers a GMP moiety from GTP to Mo-molybdopterin (Mo-MPT) cofactor (Moco or molybdenum cofactor) to form Mo-molybdopterin guanine dinucleotide (Mo-MGD) cofactor. The protein is Molybdenum cofactor guanylyltransferase of Pseudomonas putida (Arthrobacter siderocapsulatus).